The sequence spans 522 residues: F-box-like/WD repeat-containing protein TBL1XR1-B (522 aa).

Residues 4–36 (SSDEVNFLVYRYLQESGFSHSAFTFGIESHISQ) form the LisH domain. Residues 41-86 (GALVPPAALISIIQKGLQYVEAEVSINEDGTLFDGRPIESLSLIDA) enclose the F-box-like domain. The interval 122-150 (ATSANNQQPPAKNGESTANGEENGGHALA) is disordered. A compositionally biased stretch (polar residues) spans 123–141 (TSANNQQPPAKNGESTANG). 8 WD repeats span residues 175 to 214 (GHES…TSGS), 231 to 270 (PSNK…ASTL), 272 to 311 (QHKG…AKQQ), 314 to 352 (FHSA…PIKT), 355 to 394 (GHTN…CVHD), 397 to 445 (AHNK…CIHT), 448 to 487 (KHQE…LVHS), and 489 to 522 (RGTG…DLRK).

This sequence belongs to the WD repeat EBI family. Interacts with heterodimers of rxra and thrb, and this interaction is abrogated by thyroid hormone binding to thrb. Interacts with ncor1.

The protein localises to the nucleus. Its function is as follows. F-box-like protein which acts as an integral component of the N-CoR transcriptional corepressor complex. Probably regulates transcription activation mediated by nuclear receptors. May mediate the recruitment of the 19S proteasome complex, leading to the subsequent proteasomal degradation of the N-CoR complex, thereby allowing cofactor exchange and transcription activation. The protein is F-box-like/WD repeat-containing protein TBL1XR1-B (tbl1xr1-b) of Xenopus laevis (African clawed frog).